The sequence spans 478 residues: Cytochrome c-552 (478 aa).

The first 26 residues, 1–26, serve as a signal peptide directing secretion; it reads MTRIKINARRIFSLLIPFFFFTSVHA. Histidine 94 is a heme c binding site. 3 residues coordinate heme: cysteine 122, cysteine 125, and lysine 126. The heme c site is built by cysteine 160, cysteine 163, histidine 164, cysteine 209, cysteine 212, and histidine 213. Ca(2+)-binding residues include glutamate 215, tyrosine 216, lysine 261, and glutamine 263. Tyrosine 216 contacts substrate. Histidine 264 is a substrate binding site. The heme c site is built by histidine 275, cysteine 282, cysteine 285, histidine 286, histidine 301, cysteine 314, cysteine 317, histidine 318, and histidine 393.

Belongs to the cytochrome c-552 family. Requires Ca(2+) as cofactor. Heme c serves as cofactor.

It localises to the periplasm. The enzyme catalyses 6 Fe(III)-[cytochrome c] + NH4(+) + 2 H2O = 6 Fe(II)-[cytochrome c] + nitrite + 8 H(+). Its pathway is nitrogen metabolism; nitrate reduction (assimilation). Catalyzes the reduction of nitrite to ammonia, consuming six electrons in the process. The chain is Cytochrome c-552 from Escherichia coli O9:H4 (strain HS).